The following is a 1439-amino-acid chain: Microtubule organization protein AKNA (1439 aa).

2 stretches are compositionally biased toward basic and acidic residues: residues 1 to 10 (MASSETEIRW) and 25 to 35 (AWAEDKRDVDR). Residues 1–394 (MASSETEIRW…NRKPQAPARP (394 aa)) are disordered. Ser52 carries the phosphoserine modification. The span at 71–83 (WDPHPQPDGHQDS) shows a compositional bias: basic and acidic residues. A compositionally biased stretch (acidic residues) spans 89–99 (SGEEAEAEDVD). A compositionally biased stretch (polar residues) spans 263-275 (QDSSAPPAQSPQH). Over residues 276–285 (ATDRWRRETT) the composition is skewed to basic and acidic residues. Phosphoserine is present on residues Ser316, Ser499, and Ser534. Disordered stretches follow at residues 507–562 (SAEW…SAEQ) and 659–682 (IDQTQQEPEPPGSDSALDSTPALP). Over residues 533-544 (LSPSSLTSMPTL) the composition is skewed to low complexity. Residues Ser767 and Ser770 each carry the phosphoserine modification. Residues 771–804 (LPEAMRMEEEEEGEEEEEEEGGGDSLEVDGVAAT) are PEST. 2 disordered regions span residues 775-942 (MRME…QTPE) and 977-1005 (IPRRATEPSTPRSQAQRYLSSPSGPLRQR). Residues 778–792 (EEEEEGEEEEEEEGG) show a composition bias toward acidic residues. A Phosphoserine modification is found at Ser848. Pro residues predominate over residues 865–875 (PPGPGVPPHPP). Composition is skewed to polar residues over residues 879 to 891 (SAASHQSSMTSLE), 929 to 940 (SETSRVSPLTQT), and 983 to 999 (EPSTPRSQAQRYLSSPS). At Ser886 the chain carries Phosphoserine. The segment at 911–932 (HLEETWMASPETDSGFVGSETS) is PEST. Ser997 and Ser1010 each carry phosphoserine. The tract at residues 1095–1165 (LHQPLQGSPT…RARSSSVPRE (71 aa)) is disordered. Positions 1115 to 1123 (RTRGRPADS) form a DNA-binding region, a.T hook. Basic and acidic residues predominate over residues 1135–1147 (STERLPGEPRGEE). Ser1172 and Ser1173 each carry phosphoserine. Residues 1180–1211 (LPLFSEKSKTTKDSPQAARDGKRGVGSAGWPD) are disordered. Ser1228 is modified (phosphoserine). The segment at 1252–1329 (AGGAVTGDPL…RPPPGLWYLA (78 aa)) is disordered. Residues 1303–1317 (SSTPSPKQRSKQAGS) show a composition bias toward polar residues. A phosphoserine mark is found at Ser1377, Ser1387, and Ser1424.

Belongs to the AKNA family. As to quaternary structure, interacts with DCTN1. Interacts with MAPRE1/EB1. Interacts with ODF2. Interacts with CAMSAP3. Post-translationally, phosphorylated; phosphorylation regulates dissociation from and reassembly at the centrosome. Predominantly expressed by lymphoid tissues. Highly expressed in the spleen, lymph nodes and peripheral blood leukocytes, expressed at lower level in the thymus. Mainly expressed by germinal center B-lymphocytes, a stage in which receptor and ligand interactions are crucial for B-lymphocyte maturation. Expressed by B- and T-lymphocytes, Natural killer cells and CD1a(+)CD14(-) but not CD1a(-)CD14(+) dendritic cells. Weakly or not expressed in fetal liver and in adult bone marrow.

It is found in the cytoplasm. The protein resides in the cytoskeleton. Its subcellular location is the microtubule organizing center. The protein localises to the centrosome. It localises to the centriole. It is found in the nucleus. Its function is as follows. Centrosomal protein that plays a key role in cell delamination by regulating microtubule organization. Required for the delamination and retention of neural stem cells from the subventricular zone during neurogenesis. Also regulates the epithelial-to-mesenchymal transition in other epithelial cells. Acts by increasing centrosomal microtubule nucleation and recruiting nucleation factors and minus-end stabilizers, thereby destabilizing microtubules at the adherens junctions and mediating constriction of the apical endfoot. In addition, may also act as a transcription factor that specifically activates the expression of the CD40 receptor and its ligand CD40L/CD154, two cell surface molecules on lymphocytes that are critical for antigen-dependent-B-cell development. Binds to A/T-rich promoters. It is unclear how it can both act as a microtubule organizer and as a transcription factor; additional evidences are required to reconcile these two apparently contradictory functions. The polypeptide is Microtubule organization protein AKNA (Homo sapiens (Human)).